The sequence spans 669 residues: MATTFGSPSGDSRRGVASPRPKGREAKNTFCRNVTIYGHCRYENSKCRPPHLPDHVLNQNENAKKRFNVDSPSFTPLTTTPNGSVTASARNAAISPKAANAAVFTPKSQRSAVSTPNLHNKEPALDWHAPDFQEFVPETFGGPMVDSNASASYSGYDPYTSSANLASIAGQGHQSSAMNPYAQGHSGLEASYYQNPSAFQTSPAYHLYWPVGPQPTSLLGYQRTAHDFFIPDALREDLQKRAEVARQVMPNSTLPVIEQFHSLFCLDTTPQKNNAPFGYVSWIYKAISGKDGKTYALRRLENFRLTSEPAIRSAQAWKRIFNGSIVTIHEAFTTRAFGDSSLIIVTDYHPNSKSLADEHFKPMQRFNGRQATSSHVPEHVLWGYIVQIASALKAIHGSGLAARLISPSKTLLTAKNRIRLNACAIMDIVQFETARPVAEAQADDFVQLGRMILCIANNNTTAHLQMQKSMDHVTRNYTARLKECIQWLLNPQPPLGTPSSPTTPAPGSKDIDNFLGGISDQLASVFDSELHAQDTLTNTLGRELESSRIVRLLVKLNMVNERPELDASQQMSGGNTSNPSSVWAETGERYYLKLFRDYVFHQVDANGHPVTDLAHVLDCLNKLDAGTDEKIALISRDEQNVLIVSFREVKRGLEIAFQDLIRAGRGQGK.

Residues 1-10 (MATTFGSPSG) show a composition bias toward polar residues. Residues 1–25 (MATTFGSPSGDSRRGVASPRPKGRE) form a disordered region. The C3H1-type zinc-finger motif lies at 25 to 54 (EAKNTFCRNVTIYGHCRYENSKCRPPHLPD). Positions 247–519 (QVMPNSTLPV…DIDNFLGGIS (273 aa)) are pseudokinase domain. Residues R298, 347-354 (DYHPNSKS), and 408-409 (SK) each bind ATP. A coiled-coil region spans residues 520–558 (DQLASVFDSELHAQDTLTNTLGRELESSRIVRLLVKLNM). Positions 559–669 (VNERPELDAS…LIRAGRGQGK (111 aa)) are knob domain.

Belongs to the protein kinase superfamily. PAN3 family. In terms of assembly, homodimer. Forms a heterotrimer with a catalytic subunit PAN2 to form the poly(A)-nuclease (PAN) deadenylation complex. Interacts (via PAM-2 motif) with poly(A)-binding protein PAB1 (via PABC domain), conferring substrate specificity of the enzyme complex.

The protein resides in the cytoplasm. Functionally, regulatory subunit of the poly(A)-nuclease (PAN) deadenylation complex, one of two cytoplasmic mRNA deadenylases involved in mRNA turnover. PAN specifically shortens poly(A) tails of RNA and the activity is stimulated by poly(A)-binding protein PAB1. PAN deadenylation is followed by rapid degradation of the shortened mRNA tails by the CCR4-NOT complex. Deadenylated mRNAs are then degraded by two alternative mechanisms, namely exosome-mediated 3'-5' exonucleolytic degradation, or deadenylation-dependent mRNA decaping and subsequent 5'-3' exonucleolytic degradation by XRN1. May also be involved in post-transcriptional maturation of mRNA poly(A) tails. PAN3 acts as a positive regulator for PAN activity, recruiting the catalytic subunit PAN2 to mRNA via its interaction with RNA and with PAB1. This chain is PAN2-PAN3 deadenylation complex subunit PAN3, found in Phaeosphaeria nodorum (strain SN15 / ATCC MYA-4574 / FGSC 10173) (Glume blotch fungus).